The primary structure comprises 561 residues: DNA ligase (561 aa).

Glu-247 contributes to the ATP binding site. Catalysis depends on Lys-249, which acts as the N6-AMP-lysine intermediate. The ATP site is built by Arg-254, Arg-269, Glu-299, Phe-339, Arg-414, and Lys-420.

It belongs to the ATP-dependent DNA ligase family. In terms of assembly, monomer. It depends on Mg(2+) as a cofactor.

It carries out the reaction ATP + (deoxyribonucleotide)n-3'-hydroxyl + 5'-phospho-(deoxyribonucleotide)m = (deoxyribonucleotide)n+m + AMP + diphosphate.. Its function is as follows. DNA ligase that seals nicks in double-stranded DNA during DNA replication, DNA recombination and DNA repair. The chain is DNA ligase from Pyrococcus furiosus (strain ATCC 43587 / DSM 3638 / JCM 8422 / Vc1).